The chain runs to 627 residues: tRNA uridine 5-carboxymethylaminomethyl modification enzyme MnmG (627 aa).

FAD contacts are provided by residues 13 to 18, valine 125, and serine 180; that span reads GGGHAG. 274-288 serves as a coordination point for NAD(+); the sequence is GPRYCPSIEDKVVRF. Glutamine 371 contacts FAD.

It belongs to the MnmG family. Homodimer. Heterotetramer of two MnmE and two MnmG subunits. FAD serves as cofactor.

The protein localises to the cytoplasm. NAD-binding protein involved in the addition of a carboxymethylaminomethyl (cmnm) group at the wobble position (U34) of certain tRNAs, forming tRNA-cmnm(5)s(2)U34. The sequence is that of tRNA uridine 5-carboxymethylaminomethyl modification enzyme MnmG from Francisella tularensis subsp. novicida (strain U112).